Here is a 339-residue protein sequence, read N- to C-terminus: Glyceraldehyde-3-phosphate dehydrogenase (339 aa).

NAD(+) is bound by residues 13-14, Asp35, and Lys84; that span reads RI. D-glyceraldehyde 3-phosphate is bound by residues 156-158, Thr187, 216-217, and Arg239; these read SCT and TG. Cys157 functions as the Nucleophile in the catalytic mechanism. Asn321 is an NAD(+) binding site.

It belongs to the glyceraldehyde-3-phosphate dehydrogenase family. As to quaternary structure, homotetramer.

Its subcellular location is the cytoplasm. The enzyme catalyses D-glyceraldehyde 3-phosphate + phosphate + NAD(+) = (2R)-3-phospho-glyceroyl phosphate + NADH + H(+). It participates in carbohydrate degradation; glycolysis; pyruvate from D-glyceraldehyde 3-phosphate: step 1/5. The sequence is that of Glyceraldehyde-3-phosphate dehydrogenase from Onchocerca volvulus.